The following is a 381-amino-acid chain: cAMP-dependent protein kinase type I-beta regulatory subunit (381 aa).

A dimerization and phosphorylation region spans residues Met1–Val136. Phosphoserine is present on Ser3. Tyr21 bears the 3'-nitrotyrosine mark. Positions Leu66 to Asn88 are disordered. 2 positions are modified to phosphoserine: Ser77 and Ser83. The residue at position 85 (Thr85) is a Phosphothreonine. The short motif at Arg96–Val100 is the Pseudophosphorylation motif element. An Omega-N-methylarginine modification is found at Arg97. 3',5'-cyclic AMP contacts are provided by residues Leu137–Ser254, Glu202, Arg211, Ile255–Val381, Glu326, and Arg335.

The protein belongs to the cAMP-dependent kinase regulatory chain family. In terms of assembly, the inactive holoenzyme is composed of two regulatory chains and two catalytic chains. Activation by cAMP releases the two active catalytic monomers and the regulatory dimer. Interacts with PRKX; regulates this cAMP-dependent protein kinase. Interacts with smAKAP; this interaction may target PRKAR1B to the plasma membrane. Post-translationally, the pseudophosphorylation site binds to the substrate-binding region of the catalytic chain, resulting in the inhibition of its activity. In terms of tissue distribution, four types of regulatory chains are found: I-alpha, I-beta, II-alpha, and II-beta. Their expression varies among tissues and is in some cases constitutive and in others inducible.

It localises to the cell membrane. Functionally, regulatory subunit of the cAMP-dependent protein kinases involved in cAMP signaling in cells. The sequence is that of cAMP-dependent protein kinase type I-beta regulatory subunit (Prkar1b) from Mus musculus (Mouse).